A 1230-amino-acid chain; its full sequence is Protein transport protein Sec31A (1230 aa).

WD repeat units follow at residues 4 to 47, 64 to 111, 120 to 160, 166 to 206, 209 to 254, 258 to 298, and 301 to 342; these read KEID…EIFE, SSSH…AGDK, KHTG…TPMT, QPPE…PIIK, DHSN…SPLR, NHAR…VLYE, and TNTQ…DGLR. The tract at residues 161–470 is interaction with SEC13; that stretch reads PGAKTQPPED…IEASQTEFEK (310 aa). A WD 8; interaction with SEC13 repeat occupies 397-429; sequence SFSFGGKLVTFESVAVPLQQGAEQQRRQPVFIS. The residue at position 423 (arginine 423) is an Asymmetric dimethylarginine. A phosphoserine mark is found at serine 526 and serine 531. A Glycyl lysine isopeptide (Lys-Gly) (interchain with G-Cter in ubiquitin) cross-link involves residue lysine 646. Disordered stretches follow at residues 789 to 905 and 924 to 1104; these read QGKP…ASNA and MYTA…PIGN. Serine 798 carries the post-translational modification Phosphoserine. The interaction with PDCD6 stretch occupies residues 799 to 1123; it reads SQSPYERQPL…TEKITKKPIP (325 aa). The ALG-2-binding site motif-2 (ABS-2) signature appears at 841-847; sequence GFIMQGN. The segment covering 866 to 876 has biased composition (pro residues); that stretch reads QLPPYPQPQPY. Low complexity-rich tracts occupy residues 930–940 and 959–975; these read ASSPTSSSAAS and PSSSAYALPPGTTGTPP. Polar residues-rich tracts occupy residues 981–995 and 1033–1064; these read PASQRTENQSFQDQA and PIMNPSGDPQSQGLQQQPSTPGPLSSHASFPQ. Residue threonine 1171 is modified to Phosphothreonine. Residue serine 1173 is modified to Phosphoserine. Lysine 1227 is covalently cross-linked (Glycyl lysine isopeptide (Lys-Gly) (interchain with G-Cter in ubiquitin)).

The protein belongs to the WD repeat SEC31 family. As to quaternary structure, COPII is composed of at least 5 proteins: the SEC23/24 complex, the SEC13/31 complex and SAR1. SEC13 and SEC31 make a 2:2 tetramer that forms the edge element of the COPII outer coat. The tetramer self-assembles in multiple copies to form the complete polyhedral cage. Interacts (via WD 8) with SEC13. Interacts with PDCD6; interaction takes place in response to cytosolic calcium increase and leads to bridge together the BCR(KLHL12) complex and SEC31A, leading to monoubiquitination. Interacts with KLHL12. In terms of processing, monoubiquitinated by the BCR(KLHL12) E3 ubiquitin ligase complex, leading to regulate the size of COPII coats.

The protein resides in the cytoplasm. It is found in the cytoplasmic vesicle. Its subcellular location is the COPII-coated vesicle membrane. The protein localises to the endoplasmic reticulum membrane. Its function is as follows. Component of the coat protein complex II (COPII) which promotes the formation of transport vesicles from the endoplasmic reticulum (ER). The coat has two main functions, the physical deformation of the endoplasmic reticulum membrane into vesicles and the selection of cargo molecules. The protein is Protein transport protein Sec31A (Sec31a) of Mus musculus (Mouse).